An 823-amino-acid chain; its full sequence is MEPHLKIDVSSASGSTTTGATASTSEAPQDSQAQQTMPPPSSDWSNQFNSPEAVSPKANGIKCFSPYSQEDMGPFVEQLLPFVRASAYNWFHLQAAKRRHFKEFDKKMCASEENAKLAELQNDRDELKVKWASRLLGKIKKDIQNDDKEAFISAINGSEPNKCIISVADQKGKMRRIDCLRQADKVWRLDLVTIILFKGIPLESTDGERLERSEACVHPLCINPFHMAISVRGLDVFMANYLKDVDTKITLTYPRNDELSDTVMVKQEPGEQTIVAPHAVLGTSSTHTRVWETNSERNAETIIITYDPQKACHTYFGGRATLAQQSLSAGNTYMVNKTAVDNNFFNAKRSVLCLPPPPIQNCFPYPIAGTSDSQQMDMSEDSNDGPSEKRSRDISSHDSPNSSTNDEVRRIVESGTEKLVLGSSIWAAPGQFSRTQQNQGAPGTSRQVRPLPDFQSQDSARSPGAFRSTAKPVCRMTVNTGNHGDVGVVVVDERNREHVIHAQHIVNALSSLRTTPSMRESPVGRKRMHPHTSNSFEFLNCNQEMNKNEGALGSDISPTHTAVSNLISRESSGYMASPTKFTTARGDTTSFSKIFQKIEEKHLQHNQPSTSYCNSQIQPPILSSKPVDSSVKLIAPVAVKPIMSGCNSIIPSPITTPRITPSFRMLEDDSLINVLGQLAHSNDGTTLNDSFIQHLIDTNSRSPLLSSGNAFSALSMGAVSGLVPGNSIHRPDSSASNGSNSLGVAMGLAVPQNIALAVQQTQNAMSPLHQIRVSVGAPPACSPSSSNSSLGAANQAPVSNTPQDPNAPKLPTDFSHALRNEKK.

The tract at residues 1–56 (MEPHLKIDVSSASGSTTTGATASTSEAPQDSQAQQTMPPPSSDWSNQFNSPEAVSP) is disordered. Positions 10-25 (SSASGSTTTGATASTS) are enriched in low complexity. Residues 26–52 (EAPQDSQAQQTMPPPSSDWSNQFNSPE) are compositionally biased toward polar residues. Positions 61 to 253 (IKCFSPYSQE…DVDTKITLTY (193 aa)) form a DNA-binding region, CTF/NF-I. Disordered stretches follow at residues 364–408 (PYPI…NDEV), 433–468 (SRTQ…AFRS), and 777–823 (APPA…NEKK). A compositionally biased stretch (basic and acidic residues) spans 386–396 (PSEKRSRDISS). Over residues 433–447 (SRTQQNQGAPGTSRQ) the composition is skewed to polar residues. The segment covering 777–794 (APPACSPSSSNSSLGAAN) has biased composition (low complexity).

Belongs to the CTF/NF-I family. Expressed in muscles, neurons and intestinal cells.

The protein localises to the nucleus. Its function is as follows. Probable transcription factor which recognizes and binds the palindromic sequence 5'-TTGGCANNNTGCCAA-3' present in promoters. Plays a role in locomotion, pharyngeal pumping, egg-laying, and life span. The sequence is that of Nuclear factor I family protein from Caenorhabditis elegans.